The primary structure comprises 107 residues: Iron-binding protein IscA (107 aa).

Fe cation is bound by residues C35, C99, and C101.

The protein belongs to the HesB/IscA family. As to quaternary structure, homodimer; may form tetramers and higher multimers. It depends on Fe cation as a cofactor.

Is able to transfer iron-sulfur clusters to apo-ferredoxin. Multiple cycles of [2Fe2S] cluster formation and transfer are observed, suggesting that IscA acts catalytically. Recruits intracellular free iron so as to provide iron for the assembly of transient iron-sulfur cluster in IscU in the presence of IscS, L-cysteine and the thioredoxin reductase system TrxA/TrxB. This chain is Iron-binding protein IscA, found in Enterobacter sp. (strain 638).